Reading from the N-terminus, the 285-residue chain is Phosphatidylserine decarboxylase proenzyme (285 aa).

Residues D89, H146, and S252 each act as charge relay system; for autoendoproteolytic cleavage activity in the active site. S252 acts as the Schiff-base intermediate with substrate; via pyruvic acid; for decarboxylase activity in catalysis. S252 bears the Pyruvic acid (Ser); by autocatalysis mark.

Belongs to the phosphatidylserine decarboxylase family. PSD-B subfamily. Prokaryotic type I sub-subfamily. As to quaternary structure, heterodimer of a large membrane-associated beta subunit and a small pyruvoyl-containing alpha subunit. Requires pyruvate as cofactor. In terms of processing, is synthesized initially as an inactive proenzyme. Formation of the active enzyme involves a self-maturation process in which the active site pyruvoyl group is generated from an internal serine residue via an autocatalytic post-translational modification. Two non-identical subunits are generated from the proenzyme in this reaction, and the pyruvate is formed at the N-terminus of the alpha chain, which is derived from the carboxyl end of the proenzyme. The autoendoproteolytic cleavage occurs by a canonical serine protease mechanism, in which the side chain hydroxyl group of the serine supplies its oxygen atom to form the C-terminus of the beta chain, while the remainder of the serine residue undergoes an oxidative deamination to produce ammonia and the pyruvoyl prosthetic group on the alpha chain. During this reaction, the Ser that is part of the protease active site of the proenzyme becomes the pyruvoyl prosthetic group, which constitutes an essential element of the active site of the mature decarboxylase.

It localises to the cell membrane. It catalyses the reaction a 1,2-diacyl-sn-glycero-3-phospho-L-serine + H(+) = a 1,2-diacyl-sn-glycero-3-phosphoethanolamine + CO2. It functions in the pathway phospholipid metabolism; phosphatidylethanolamine biosynthesis; phosphatidylethanolamine from CDP-diacylglycerol: step 2/2. Catalyzes the formation of phosphatidylethanolamine (PtdEtn) from phosphatidylserine (PtdSer). This Vibrio cholerae serotype O1 (strain ATCC 39541 / Classical Ogawa 395 / O395) protein is Phosphatidylserine decarboxylase proenzyme.